The primary structure comprises 955 residues: 2-oxoglutarate dehydrogenase E1 component (955 aa).

It belongs to the alpha-ketoglutarate dehydrogenase family. In terms of assembly, homodimer. Part of the 2-oxoglutarate dehydrogenase (OGDH) complex composed of E1 (2-oxoglutarate dehydrogenase), E2 (dihydrolipoamide succinyltransferase) and E3 (dihydrolipoamide dehydrogenase); the complex contains multiple copies of the three enzymatic components (E1, E2 and E3). Thiamine diphosphate serves as cofactor.

The catalysed reaction is N(6)-[(R)-lipoyl]-L-lysyl-[protein] + 2-oxoglutarate + H(+) = N(6)-[(R)-S(8)-succinyldihydrolipoyl]-L-lysyl-[protein] + CO2. Functionally, E1 component of the 2-oxoglutarate dehydrogenase (OGDH) complex which catalyzes the decarboxylation of 2-oxoglutarate, the first step in the conversion of 2-oxoglutarate to succinyl-CoA and CO(2). In Bacillus cereus (strain ATCC 10987 / NRS 248), this protein is 2-oxoglutarate dehydrogenase E1 component.